The primary structure comprises 296 residues: Glycerol-3-phosphate dehydrogenase [NAD(P)+] (296 aa).

NADPH is bound by residues Trp-12, Arg-31, and Lys-80. Residues Lys-80, Gly-108, and Ser-110 each contribute to the sn-glycerol 3-phosphate site. Ala-112 contributes to the NADPH binding site. Sn-glycerol 3-phosphate-binding residues include Lys-162, Asp-215, Ser-225, Arg-226, and Asn-227. The active-site Proton acceptor is the Lys-162. Residue Arg-226 coordinates NADPH. 2 residues coordinate NADPH: Val-250 and Glu-252.

It belongs to the NAD-dependent glycerol-3-phosphate dehydrogenase family.

The protein localises to the cytoplasm. The enzyme catalyses sn-glycerol 3-phosphate + NAD(+) = dihydroxyacetone phosphate + NADH + H(+). The catalysed reaction is sn-glycerol 3-phosphate + NADP(+) = dihydroxyacetone phosphate + NADPH + H(+). The protein operates within membrane lipid metabolism; glycerophospholipid metabolism. Its function is as follows. Catalyzes the reduction of the glycolytic intermediate dihydroxyacetone phosphate (DHAP) to sn-glycerol 3-phosphate (G3P), the key precursor for phospholipid synthesis. This chain is Glycerol-3-phosphate dehydrogenase [NAD(P)+], found in Sulfurimonas denitrificans (strain ATCC 33889 / DSM 1251) (Thiomicrospira denitrificans (strain ATCC 33889 / DSM 1251)).